A 113-amino-acid chain; its full sequence is Large ribosomal subunit protein uL24 (113 aa).

It belongs to the universal ribosomal protein uL24 family. Part of the 50S ribosomal subunit.

Its function is as follows. One of two assembly initiator proteins, it binds directly to the 5'-end of the 23S rRNA, where it nucleates assembly of the 50S subunit. Functionally, one of the proteins that surrounds the polypeptide exit tunnel on the outside of the subunit. The sequence is that of Large ribosomal subunit protein uL24 from Chlamydia felis (strain Fe/C-56) (Chlamydophila felis).